A 381-amino-acid chain; its full sequence is Homoserine O-succinyltransferase (381 aa).

The 316-residue stretch at 45-360 (NAVLVCHALN…PHGHDAFLLD (316 aa)) folds into the AB hydrolase-1 domain. Serine 151 (nucleophile) is an active-site residue. Substrate is bound at residue arginine 221. Residues aspartate 321 and histidine 354 contribute to the active site. Aspartate 355 serves as a coordination point for substrate.

Belongs to the AB hydrolase superfamily. MetX family. Homodimer.

The protein resides in the cytoplasm. The enzyme catalyses L-homoserine + succinyl-CoA = O-succinyl-L-homoserine + CoA. It functions in the pathway amino-acid biosynthesis; L-methionine biosynthesis via de novo pathway; O-succinyl-L-homoserine from L-homoserine: step 1/1. Its function is as follows. Transfers a succinyl group from succinyl-CoA to L-homoserine, forming succinyl-L-homoserine. In Burkholderia pseudomallei (strain 1710b), this protein is Homoserine O-succinyltransferase.